The chain runs to 419 residues: DNA primase DnaG (419 aa).

The region spanning 174–260 (DAIIVVEGRS…EVEDLEKDEV (87 aa)) is the Toprim domain. Glu180, Asp222, and Asp224 together coordinate Mg(2+). The interval 277–314 (HNILSESDSKNSHKKHNGKHNNKHSNNKHQQHETKVKE) is disordered. The span at 288-305 (SHKKHNGKHNNKHSNNKH) shows a compositional bias: basic residues.

It belongs to the archaeal DnaG primase family. In terms of assembly, forms a ternary complex with MCM helicase and DNA. Component of the archaeal exosome complex. Requires Mg(2+) as cofactor.

The catalysed reaction is ssDNA + n NTP = ssDNA/pppN(pN)n-1 hybrid + (n-1) diphosphate.. In terms of biological role, RNA polymerase that catalyzes the synthesis of short RNA molecules used as primers for DNA polymerase during DNA replication. Also part of the exosome, which is a complex involved in RNA degradation. Acts as a poly(A)-binding protein that enhances the interaction between heteromeric, adenine-rich transcripts and the exosome. This chain is DNA primase DnaG, found in Methanobrevibacter smithii (strain ATCC 35061 / DSM 861 / OCM 144 / PS).